The chain runs to 95 residues: Glutamyl-tRNA(Gln) amidotransferase subunit C (95 aa).

Belongs to the GatC family. As to quaternary structure, heterotrimer of A, B and C subunits.

It catalyses the reaction L-glutamyl-tRNA(Gln) + L-glutamine + ATP + H2O = L-glutaminyl-tRNA(Gln) + L-glutamate + ADP + phosphate + H(+). The catalysed reaction is L-aspartyl-tRNA(Asn) + L-glutamine + ATP + H2O = L-asparaginyl-tRNA(Asn) + L-glutamate + ADP + phosphate + 2 H(+). In terms of biological role, allows the formation of correctly charged Asn-tRNA(Asn) or Gln-tRNA(Gln) through the transamidation of misacylated Asp-tRNA(Asn) or Glu-tRNA(Gln) in organisms which lack either or both of asparaginyl-tRNA or glutaminyl-tRNA synthetases. The reaction takes place in the presence of glutamine and ATP through an activated phospho-Asp-tRNA(Asn) or phospho-Glu-tRNA(Gln). The polypeptide is Glutamyl-tRNA(Gln) amidotransferase subunit C (Mesorhizobium japonicum (strain LMG 29417 / CECT 9101 / MAFF 303099) (Mesorhizobium loti (strain MAFF 303099))).